The following is a 506-amino-acid chain: Trans-cinnamate 4-monooxygenase (506 aa).

A helical transmembrane segment spans residues 3-23 (DFVLLEKALLGLFIATIVAIT). Residues 214-219 (RSRLAQ) and Ala307 each bind (E)-cinnamate. Heme is bound at residue Cys448.

It belongs to the cytochrome P450 family. The cofactor is heme.

Its subcellular location is the membrane. It catalyses the reaction (E)-cinnamate + reduced [NADPH--hemoprotein reductase] + O2 = (E)-4-coumarate + oxidized [NADPH--hemoprotein reductase] + H2O + H(+). It participates in phenylpropanoid metabolism; trans-4-coumarate biosynthesis; trans-4-coumarate from trans-cinnamate: step 1/1. Its function is as follows. Catalyzes the first oxidative step of the phenylpropanoid pathway in higher plants by transforming trans-cinnamate into p-coumarate. The compounds formed by this pathway are essential components for lignification, pollination, and defense against ultraviolet light, predators and pathogens. The chain is Trans-cinnamate 4-monooxygenase (CYP73A10) from Petroselinum crispum (Parsley).